Here is a 333-residue protein sequence, read N- to C-terminus: Fructose-1,6-bisphosphatase class 1 (333 aa).

Glutamate 92, aspartate 113, leucine 115, and aspartate 116 together coordinate Mg(2+). Substrate contacts are provided by residues 116–119 (DGSS), asparagine 209, tyrosine 242, and lysine 272. Mg(2+) is bound at residue glutamate 278.

This sequence belongs to the FBPase class 1 family. Homotetramer. The cofactor is Mg(2+).

It is found in the cytoplasm. The catalysed reaction is beta-D-fructose 1,6-bisphosphate + H2O = beta-D-fructose 6-phosphate + phosphate. The protein operates within carbohydrate biosynthesis; Calvin cycle. This is Fructose-1,6-bisphosphatase class 1 from Chlorobium luteolum (strain DSM 273 / BCRC 81028 / 2530) (Pelodictyon luteolum).